A 405-amino-acid chain; its full sequence is CMP-sialic acid transporter 4 (405 aa).

At Met1–Asn43 the chain is on the cytoplasmic side. Residues Phe44 to Ser64 traverse the membrane as a helical segment. Over Lys65–Pro74 the chain is Lumenal. The helical transmembrane segment at Ile75 to Ile95 threads the bilayer. At Gln96–Ala121 the chain is on the cytoplasmic side. A helical membrane pass occupies residues Leu122 to Leu142. Residue Tyr143 is a topological domain, lumenal. The chain crosses the membrane as a helical span at residues Phe144–Leu164. Residues Lys165–Lys171 lie on the Cytoplasmic side of the membrane. The chain crosses the membrane as a helical span at residues Phe172–Leu192. Topologically, residues Ser193–Gly203 are lumenal. The helical transmembrane segment at Leu204 to Ala224 threads the bilayer. Topologically, residues Ser225–Asn244 are cytoplasmic. The chain crosses the membrane as a helical span at residues Leu245 to Phe265. Over Gln266–Thr281 the chain is Lumenal. A helical membrane pass occupies residues Met282–Ala302. The Cytoplasmic portion of the chain corresponds to Asp303–Ser322. Residues Ala323–Ile343 traverse the membrane as a helical segment. The Lumenal portion of the chain corresponds to Ser344 to Ile405.

The protein belongs to the nucleotide-sugar transporter family. CMP-Sialate:CMP antiporter (TC 2.A.7.12) subfamily.

Its subcellular location is the golgi apparatus membrane. Functionally, sugar transporter involved in the transport of CMP-sialic acid from the cytoplasm into the Golgi. May transport important nucleotide sugars such as CMP-Kdo (2-keto-3-deoxy-D-manno-octulosonic acid) in physiological conditions. The polypeptide is CMP-sialic acid transporter 4 (Oryza sativa subsp. japonica (Rice)).